Consider the following 900-residue polypeptide: Nitrate reductase [NADH] (900 aa).

Cys-172 serves as a coordination point for Mo-molybdopterin. One can recognise a Cytochrome b5 heme-binding domain in the interval 521–596; sequence TKMYSLSEVK…LEDYRVGELI (76 aa). Residues His-556 and His-579 each contribute to the heme site. An FAD-binding FR-type domain is found at 644-756; it reads REKIPCKLIS…KGPLGHIEYT (113 aa). FAD contacts are provided by residues 696–699, 713–717, Phe-718, Phe-725, 730–732, and Thr-783; these read RAYT, VVKVY, and AMS.

It belongs to the nitrate reductase family. In terms of assembly, homodimer. Requires FAD as cofactor. It depends on heme as a cofactor. The cofactor is Mo-molybdopterin.

It catalyses the reaction nitrite + NAD(+) + H2O = nitrate + NADH + H(+). In terms of biological role, nitrate reductase is a key enzyme involved in the first step of nitrate assimilation in plants, fungi and bacteria. This chain is Nitrate reductase [NADH] (NIA), found in Lotus japonicus (Lotus corniculatus var. japonicus).